We begin with the raw amino-acid sequence, 331 residues long: Glyoxylate reductase (331 aa).

NADP(+) is bound by residues 158–161 (FGRI), 180–182 (SRT), and 239–241 (TSR). Active-site residues include Arg-241 and Glu-270. His-288 functions as the Proton donor in the catalytic mechanism. Residue 288-290 (HIG) coordinates NADP(+).

The protein belongs to the D-isomer specific 2-hydroxyacid dehydrogenase family. GyaR subfamily. In terms of assembly, homodimer.

It is found in the cytoplasm. It catalyses the reaction glycolate + NAD(+) = glyoxylate + NADH + H(+). This chain is Glyoxylate reductase, found in Thermococcus litoralis (strain ATCC 51850 / DSM 5473 / JCM 8560 / NS-C).